The sequence spans 322 residues: Ribosomal RNA small subunit methyltransferase H (322 aa).

S-adenosyl-L-methionine contacts are provided by residues G42 to H44, D62, F86, D107, and Q114.

Belongs to the methyltransferase superfamily. RsmH family.

The protein resides in the cytoplasm. The enzyme catalyses cytidine(1402) in 16S rRNA + S-adenosyl-L-methionine = N(4)-methylcytidine(1402) in 16S rRNA + S-adenosyl-L-homocysteine + H(+). Its function is as follows. Specifically methylates the N4 position of cytidine in position 1402 (C1402) of 16S rRNA. This is Ribosomal RNA small subunit methyltransferase H from Janthinobacterium sp. (strain Marseille) (Minibacterium massiliensis).